Here is a 510-residue protein sequence, read N- to C-terminus: NAD(P)H-quinone oxidoreductase subunit 2 A, chloroplastic (510 aa).

Helical transmembrane passes span 24–44, 57–77, 99–119, 124–144, 149–169, 183–203, 227–247, 295–315, 323–343, 354–374, 395–415, 418–438, and 484–504; these read LLLF…GLIL, IPWL…ALLF, IFQF…VEYI, MAIT…MFLC, LITI…LSGY, YLLM…WLYG, PGIS…LSPA, WHLL…LIAI, MLAY…IVGD, YMLF…SFGL, ALSL…AGFF, LHLF…IGLL, and MIVC…IIAI.

It belongs to the complex I subunit 2 family. As to quaternary structure, NDH is composed of at least 16 different subunits, 5 of which are encoded in the nucleus.

It localises to the plastid. Its subcellular location is the chloroplast thylakoid membrane. The enzyme catalyses a plastoquinone + NADH + (n+1) H(+)(in) = a plastoquinol + NAD(+) + n H(+)(out). The catalysed reaction is a plastoquinone + NADPH + (n+1) H(+)(in) = a plastoquinol + NADP(+) + n H(+)(out). NDH shuttles electrons from NAD(P)H:plastoquinone, via FMN and iron-sulfur (Fe-S) centers, to quinones in the photosynthetic chain and possibly in a chloroplast respiratory chain. The immediate electron acceptor for the enzyme in this species is believed to be plastoquinone. Couples the redox reaction to proton translocation, and thus conserves the redox energy in a proton gradient. This chain is NAD(P)H-quinone oxidoreductase subunit 2 A, chloroplastic, found in Carica papaya (Papaya).